Consider the following 245-residue polypeptide: Polyhedrin (245 aa).

The protein belongs to the polyhedrin family.

Its function is as follows. Major component of the virus occlusion bodies, which are large proteinaceous structures (polyhedra), that protect the virus from the outside environment for extended periods until they are ingested by insect larvae. The polypeptide is Polyhedrin (PH) (Hyphantria cunea nuclear polyhedrosis virus (HcNPV)).